The chain runs to 436 residues: ATP-dependent protease ATPase subunit HslU (436 aa).

Residues Ile19, 61 to 65, Asp249, Glu314, and Arg386 each bind ATP; that span reads GVGKT.

Belongs to the ClpX chaperone family. HslU subfamily. A double ring-shaped homohexamer of HslV is capped on each side by a ring-shaped HslU homohexamer. The assembly of the HslU/HslV complex is dependent on binding of ATP.

It is found in the cytoplasm. ATPase subunit of a proteasome-like degradation complex; this subunit has chaperone activity. The binding of ATP and its subsequent hydrolysis by HslU are essential for unfolding of protein substrates subsequently hydrolyzed by HslV. HslU recognizes the N-terminal part of its protein substrates and unfolds these before they are guided to HslV for hydrolysis. This chain is ATP-dependent protease ATPase subunit HslU, found in Bartonella tribocorum (strain CIP 105476 / IBS 506).